The chain runs to 161 residues: MTSIVEALVPGGKANPGPPLGPALGPLGVNIKEVVEKINEKTRDYNGMQVPVKVIVDDKKNVEIEVGTPPTASLVMKELGIQKGSGNAGSEVVGNLTISQVAKVARMKKEDVLSYDLKAAMKEVMGSCVPMGVNVEGMKAKDCQKALDEGKFDDLLAGEAW.

This sequence belongs to the universal ribosomal protein uL11 family. Part of the ribosomal stalk of the 50S ribosomal subunit. Interacts with L10 and the large rRNA to form the base of the stalk. L10 forms an elongated spine to which L12 dimers bind in a sequential fashion forming a multimeric L10(L12)X complex.

Functionally, forms part of the ribosomal stalk which helps the ribosome interact with GTP-bound translation factors. This Methanosarcina acetivorans (strain ATCC 35395 / DSM 2834 / JCM 12185 / C2A) protein is Large ribosomal subunit protein uL11.